Consider the following 87-residue polypeptide: Small ribosomal subunit protein bS20 (87 aa).

This sequence belongs to the bacterial ribosomal protein bS20 family.

Binds directly to 16S ribosomal RNA. In Nitrosomonas europaea (strain ATCC 19718 / CIP 103999 / KCTC 2705 / NBRC 14298), this protein is Small ribosomal subunit protein bS20.